Reading from the N-terminus, the 315-residue chain is Tyrosine recombinase XerC (315 aa).

In terms of domain architecture, Core-binding (CB) spans 13-104; the sequence is ADLAAAREEW…GVRSLLRHLE (92 aa). One can recognise a Tyr recombinase domain in the interval 125-309; it reads SLPKPLTADD…DTQRLLEVYD (185 aa). Residues Arg168, Lys193, His261, Arg264, and His287 contribute to the active site. The active-site O-(3'-phospho-DNA)-tyrosine intermediate is Tyr296.

This sequence belongs to the 'phage' integrase family. XerC subfamily. In terms of assembly, forms a cyclic heterotetrameric complex composed of two molecules of XerC and two molecules of XerD.

It is found in the cytoplasm. In terms of biological role, site-specific tyrosine recombinase, which acts by catalyzing the cutting and rejoining of the recombining DNA molecules. The XerC-XerD complex is essential to convert dimers of the bacterial chromosome into monomers to permit their segregation at cell division. It also contributes to the segregational stability of plasmids. The chain is Tyrosine recombinase XerC from Brucella suis biovar 1 (strain 1330).